The following is a 369-amino-acid chain: Small ribosomal subunit biogenesis GTPase RsgA (369 aa).

The 159-residue stretch at 88 to 246 folds into the CP-type G domain; it reads RTVLERPPVA…LADTPGFNQP (159 aa). GTP-binding positions include 137–140 and 188–196; these read NKQD and GPSGVGKSS. Cys-271, Cys-276, His-278, and Cys-284 together coordinate Zn(2+). Residues 307 to 369 form a disordered region; that stretch reads QNPENSRETD…DLDNLQEDWE (63 aa). The span at 359–369 shows a compositional bias: acidic residues; it reads TDLDNLQEDWE.

This sequence belongs to the TRAFAC class YlqF/YawG GTPase family. RsgA subfamily. As to quaternary structure, monomer. Associates with 30S ribosomal subunit, binds 16S rRNA. The cofactor is Zn(2+).

The protein resides in the cytoplasm. Functionally, one of several proteins that assist in the late maturation steps of the functional core of the 30S ribosomal subunit. Helps release RbfA from mature subunits. May play a role in the assembly of ribosomal proteins into the subunit. Circularly permuted GTPase that catalyzes slow GTP hydrolysis, GTPase activity is stimulated by the 30S ribosomal subunit. The protein is Small ribosomal subunit biogenesis GTPase RsgA of Synechocystis sp. (strain ATCC 27184 / PCC 6803 / Kazusa).